The chain runs to 103 residues: Protein translation factor SUI1 homolog (103 aa).

This sequence belongs to the SUI1 family.

The chain is Protein translation factor SUI1 homolog from Hyperthermus butylicus (strain DSM 5456 / JCM 9403 / PLM1-5).